Here is a 329-residue protein sequence, read N- to C-terminus: Probable nicotianamine synthase 7 (329 aa).

The protein belongs to the nicotianamine synthase (NAS)-like family.

It catalyses the reaction 3 S-adenosyl-L-methionine = nicotianamine + 3 S-methyl-5'-thioadenosine + 3 H(+). Its function is as follows. Synthesizes nicotianamine, a polyamine that is the first intermediate in the synthesis of the phytosiderophores of the mugineic acid type found in gramineae which serves as a sensor for the physiological iron status within the plant, and/or might be involved in the transport of iron. The polypeptide is Probable nicotianamine synthase 7 (NAS7) (Hordeum vulgare (Barley)).